A 196-amino-acid polypeptide reads, in one-letter code: Ribosome maturation factor RimP (196 aa).

A disordered region spans residues 164–196 (LAPQKPNKPGPKKTGHEKKKPSNESAAGKPRAE). A compositionally biased stretch (basic residues) spans 173–182 (GPKKTGHEKK).

It belongs to the RimP family.

The protein localises to the cytoplasm. Required for maturation of 30S ribosomal subunits. In Xanthomonas oryzae pv. oryzae (strain MAFF 311018), this protein is Ribosome maturation factor RimP.